A 1224-amino-acid chain; its full sequence is Protein MSN5 (1224 aa).

The segment at 1200–1224 (NKENGDMLDDPNIEDGAVGNLFDDN) is disordered.

Interacts with CEX1.

This Saccharomyces cerevisiae (strain ATCC 204508 / S288c) (Baker's yeast) protein is Protein MSN5 (MSN5).